Reading from the N-terminus, the 1163-residue chain is Pesticidal crystal protein Cry26Aa (1163 aa).

This sequence belongs to the delta endotoxin family.

In terms of biological role, promotes colloidosmotic lysis by binding to the midgut epithelial cells of insects. This chain is Pesticidal crystal protein Cry26Aa (cry26Aa), found in Bacillus thuringiensis subsp. finitimus.